We begin with the raw amino-acid sequence, 112 residues long: Large ribosomal subunit protein bL20c (112 aa).

It belongs to the bacterial ribosomal protein bL20 family.

Its subcellular location is the plastid. The protein resides in the chloroplast. Its function is as follows. Binds directly to 23S ribosomal RNA and is necessary for the in vitro assembly process of the 50S ribosomal subunit. It is not involved in the protein synthesizing functions of that subunit. In Chlamydomonas reinhardtii (Chlamydomonas smithii), this protein is Large ribosomal subunit protein bL20c (rpl20).